A 462-amino-acid chain; its full sequence is Adenosylhomocysteinase (462 aa).

Substrate contacts are provided by threonine 55, aspartate 128, and glutamate 188. Position 189–191 (189–191) interacts with NAD(+); sequence TTT. Substrate contacts are provided by lysine 218 and aspartate 222. NAD(+) is bound by residues asparagine 223, 252–257, glutamate 275, asparagine 310, 331–333, and asparagine 376; these read GYGDVG and IGH.

Belongs to the adenosylhomocysteinase family. The cofactor is NAD(+).

It is found in the cytoplasm. It catalyses the reaction S-adenosyl-L-homocysteine + H2O = L-homocysteine + adenosine. It participates in amino-acid biosynthesis; L-homocysteine biosynthesis; L-homocysteine from S-adenosyl-L-homocysteine: step 1/1. May play a key role in the regulation of the intracellular concentration of adenosylhomocysteine. This is Adenosylhomocysteinase from Roseobacter denitrificans (strain ATCC 33942 / OCh 114) (Erythrobacter sp. (strain OCh 114)).